We begin with the raw amino-acid sequence, 487 residues long: uncharacterized protein (487 aa).

A helical transmembrane segment spans residues 7–28 (HVISIFETLGAYFINIFYNFLY). N-linked (GlcNAc...) asparagine; by host glycosylation is found at Asn-73, Asn-83, and Asn-195. Residues 196–235 (RSLLHQIEELTSEKKSLLADLSTLRKKYEKRQSEYRRLVQ) are a coiled coil. Over residues 294–305 (TSQELTSKSPNN) the composition is skewed to polar residues. The disordered stretch occupies residues 294 to 324 (TSQELTSKSPNNYPVPHSRTIVSKPSDNYPV). N-linked (GlcNAc...) asparagine; by host glycosylation is present at Asn-462.

Belongs to the asfivirus B475L family.

It localises to the host membrane. This is an uncharacterized protein from African swine fever virus (isolate Tick/South Africa/Pretoriuskop Pr4/1996) (ASFV).